The chain runs to 167 residues: Translationally-controlled tumor protein homolog (167 aa).

The TCTP domain maps to 1–167; sequence MLIYQDVLTG…WKDGLKEIKI (167 aa).

This sequence belongs to the TCTP family.

Its subcellular location is the cytoplasm. The protein resides in the cytoskeleton. In terms of biological role, involved in protein synthesis. Involved in microtubule stabilization. The protein is Translationally-controlled tumor protein homolog of Cryptococcus neoformans var. neoformans serotype D (strain B-3501A) (Filobasidiella neoformans).